Reading from the N-terminus, the 447-residue chain is Glycerol-3-phosphate acyltransferase ATS11, chloroplastic (447 aa).

The interval 1–21 (MFILSSSSSLPSPLSLSSSRV) is disordered. A chloroplast-targeting transit peptide spans 1 to 48 (MFILSSSSSLPSPLSLSSSRVSLPPPSSSSLNLLPLSPHFQPPNLACS). The short motif at 217-222 (HQTEAD) is the HXXXXD motif element.

Belongs to the GPAT/DAPAT family.

The protein resides in the plastid. Its subcellular location is the chloroplast stroma. It catalyses the reaction a fatty acyl-[ACP] + sn-glycerol 3-phosphate = a 1-acyl-sn-glycero-3-phosphate + holo-[ACP]. The catalysed reaction is sn-glycerol 3-phosphate + an acyl-CoA = a 1-acyl-sn-glycero-3-phosphate + CoA. It functions in the pathway phospholipid metabolism; CDP-diacylglycerol biosynthesis; CDP-diacylglycerol from sn-glycerol 3-phosphate: step 1/3. In terms of biological role, esterifies the acyl-group from acyl-acyl carrier proteins (acyl-ACPs) to the sn-1 position of glycerol-3-phosphate. The physiological acyl donors in chloroplasts are acyl-ACPs, but acyl-CoAs are used as artificial donor for in vitro reactions. The enzyme from chilling-resistant plants discriminates against non-fluid palmitic acid and selects oleic acid whereas the enzyme from sensitive plants accepts both fatty acids. Squash is chilling-sensitive. Preferably utilizes oleoyl groups (18:1-ACP) and has lower affinity to palmitoyl (16:0-ACP) and stearoyl groups (18:0-ACP). The sequence is that of Glycerol-3-phosphate acyltransferase ATS11, chloroplastic from Cucurbita moschata (Winter crookneck squash).